Consider the following 229-residue polypeptide: 23 kDa piroplasm membrane protein (229 aa).

A signal peptide spans 1-19; the sequence is MNKYFKVFFFVLLTHALKS. Topologically, residues 20–203 are extracellular; that stretch reads ALIFGQATLQ…EKEDTNKKKY (184 aa). The chain crosses the membrane as a helical span at residues 204–224; sequence VLMVVVVVVFVVVASLVVFLV. The Cytoplasmic portion of the chain corresponds to 225–229; sequence KFCLK.

It localises to the membrane. This Theileria parva (East coast fever infection agent) protein is 23 kDa piroplasm membrane protein.